Reading from the N-terminus, the 273-residue chain is Urease accessory protein UreD (273 aa).

Belongs to the UreD family. As to quaternary structure, ureD, UreF and UreG form a complex that acts as a GTP-hydrolysis-dependent molecular chaperone, activating the urease apoprotein by helping to assemble the nickel containing metallocenter of UreC. The UreE protein probably delivers the nickel.

The protein resides in the cytoplasm. Functionally, required for maturation of urease via the functional incorporation of the urease nickel metallocenter. This is Urease accessory protein UreD from Rhizobium rhizogenes (strain K84 / ATCC BAA-868) (Agrobacterium radiobacter).